The primary structure comprises 269 residues: UPF0494 membrane protein C1348.01 (269 aa).

4 helical membrane-spanning segments follow: residues 107-127 (WPLL…KFEV), 144-164 (IWVP…SLIF), 177-197 (GVII…IAAL), and 201-221 (ITGL…LSLG).

It belongs to the UPF0494 family.

It is found in the vacuole membrane. The chain is UPF0494 membrane protein C1348.01 from Schizosaccharomyces pombe (strain 972 / ATCC 24843) (Fission yeast).